A 78-amino-acid polypeptide reads, in one-letter code: Large ribosomal subunit protein bL28 (78 aa).

The interval 1–28 (MSAICQVTGRQPGYGKSVSHSHRRTSRR) is disordered.

The protein belongs to the bacterial ribosomal protein bL28 family.

In Corynebacterium diphtheriae (strain ATCC 700971 / NCTC 13129 / Biotype gravis), this protein is Large ribosomal subunit protein bL28.